Reading from the N-terminus, the 305-residue chain is NAD kinase 2 (305 aa).

Aspartate 78 serves as the catalytic Proton acceptor. NAD(+)-binding positions include 78-79 (DG), 152-153 (NE), aspartate 182, 193-198 (TAYSLS), and asparagine 251.

The protein belongs to the NAD kinase family. A divalent metal cation is required as a cofactor.

The protein resides in the cytoplasm. It catalyses the reaction NAD(+) + ATP = ADP + NADP(+) + H(+). Its function is as follows. Involved in the regulation of the intracellular balance of NAD and NADP, and is a key enzyme in the biosynthesis of NADP. Catalyzes specifically the phosphorylation on 2'-hydroxyl of the adenosine moiety of NAD to yield NADP. The polypeptide is NAD kinase 2 (Trichormus variabilis (strain ATCC 29413 / PCC 7937) (Anabaena variabilis)).